Here is a 2275-residue protein sequence, read N- to C-terminus: Multifunctional protein pyrABCN (2275 aa).

The interval 1–440 (MPETVGHEEP…PGPRDTEYLF (440 aa)) is GATase (Glutamine amidotransferase). L-glutamine-binding residues include Ser-102, Gly-313, and Gly-315. One can recognise a Glutamine amidotransferase type-1 domain in the interval 265–453 (RVLCLDVGLK…INAIKDTIAS (189 aa)). The active-site Nucleophile; for GATase activity is the Cys-342. Positions 343, 346, 384, 386, and 387 each coordinate L-glutamine. Residues His-426 and Glu-428 each act as for GATase activity in the active site. The segment at 441–482 (DVFINAIKDTIASPEALQKPVNFPGGAVAENIKASPRVSVKK) is linker. Residues 483–1522 (VLILGSGGLS…TNVKNAKILI (1040 aa)) are CPSase (Carbamoyl-phosphate synthase). ATP is bound by residues Arg-600, Arg-640, Gly-646, Gly-647, Arg-677, Met-679, Glu-684, Gly-710, Ile-711, His-712, Gln-753, and Glu-767. ATP-grasp domains follow at residues 604 to 796 (ARSM…KLGL) and 1139 to 1330 (SRML…KAMI). Residues Gln-753, Glu-767, and Asn-769 each contribute to the Mg(2+) site. Residues Gln-753, Glu-767, and Asn-769 each contribute to the Mn(2+) site. The ATP site is built by Arg-1175, Lys-1214, Ile-1216, Glu-1221, Gly-1246, Val-1247, His-1248, Ser-1249, Gln-1289, and Glu-1301. Mg(2+)-binding residues include Gln-1289, Glu-1301, and Asn-1303. Residues Gln-1289, Glu-1301, and Asn-1303 each coordinate Mn(2+). The region spanning 1396-1575 (FKLPKRNILL…KDFEAVTKAS (180 aa)) is the MGS-like domain. A linker region spans residues 1523–1532 (EAIARHYALN). The segment at 1533 to 1862 (VQTIDYQTSH…FQGKTSCLDS (330 aa)) is defective DHOase domain. Positions 1863–1882 (EITPDAPKGSDMSGHRIVPA) are disordered. The tract at residues 1863–1953 (EITPDAPKGS…LQMLSRSPFK (91 aa)) is linker. Positions 1954 to 2258 (QKHVLSVNQF…EFDMLMWMQM (305 aa)) are ATCase (Aspartate transcarbamylase). Residues Arg-2006 and Thr-2007 each contribute to the carbamoyl phosphate site. An L-aspartate-binding site is contributed by Lys-2034. Arg-2055, His-2083, and Gln-2086 together coordinate carbamoyl phosphate. L-aspartate is bound by residues Arg-2116 and Arg-2178. Residues Leu-2217 and Pro-2218 each coordinate carbamoyl phosphate.

This sequence in the central section; belongs to the metallo-dependent hydrolases superfamily. DHOase family. CAD subfamily. In the N-terminal section; belongs to the CarA family. The protein in the 2nd section; belongs to the CarB family. It in the 3rd section; belongs to the metallo-dependent hydrolases superfamily. DHOase family. CAD subfamily. This sequence in the C-terminal section; belongs to the aspartate/ornithine carbamoyltransferase superfamily. ATCase family. Mg(2+) serves as cofactor. It depends on Mn(2+) as a cofactor.

It catalyses the reaction hydrogencarbonate + L-glutamine + 2 ATP + H2O = carbamoyl phosphate + L-glutamate + 2 ADP + phosphate + 2 H(+). The enzyme catalyses L-glutamine + H2O = L-glutamate + NH4(+). It carries out the reaction hydrogencarbonate + NH4(+) + 2 ATP = carbamoyl phosphate + 2 ADP + phosphate + 2 H(+). The catalysed reaction is carbamoyl phosphate + L-aspartate = N-carbamoyl-L-aspartate + phosphate + H(+). It functions in the pathway pyrimidine metabolism; UMP biosynthesis via de novo pathway; (S)-dihydroorotate from bicarbonate: step 1/3. It participates in pyrimidine metabolism; UMP biosynthesis via de novo pathway; (S)-dihydroorotate from bicarbonate: step 2/3. In terms of biological role, multifunctional protein that encodes the first 2 enzymatic activities of the de novo pyrimidine pathway: carbamoylphosphate synthetase (CPSase; EC 6.3.5.5) and aspartate transcarbamylase (ATCase; EC 2.1.3.2). The CPSase-function is accomplished in 2 steps, by a glutamine-dependent amidotransferase activity (GATase) that binds and cleaves glutamine to produce ammonia, followed by an ammonium-dependent carbamoyl phosphate synthetase, which reacts with the ammonia, hydrogencarbonate and ATP to form carbamoyl phosphate. The endogenously produced carbamoyl phosphate is sequestered and channeled to the ATCase active site. ATCase then catalyzes the formation of carbamoyl-L-aspartate from L-aspartate and carbamoyl phosphate. This Emericella nidulans (strain FGSC A4 / ATCC 38163 / CBS 112.46 / NRRL 194 / M139) (Aspergillus nidulans) protein is Multifunctional protein pyrABCN.